Here is a 374-residue protein sequence, read N- to C-terminus: Putative cullin-like protein 2 (374 aa).

The protein belongs to the cullin family.

This Arabidopsis thaliana (Mouse-ear cress) protein is Putative cullin-like protein 2.